We begin with the raw amino-acid sequence, 409 residues long: MVSTPEIKNQLARPDALGRFGKFGGKYVPETLMPALGELETAYQKYRDDASYQTELQNLLRDYVGRPSPLYFAERLTEYYARPDGTGAQIYLKREDLNHTGAHKINNALAQVLLAKRIGKQRVIAETGAGQHGVATATVCARFGLDCVIYMGIHDMERQALNVFRMKLMGAEVRPVEAGTGTLKDATSEAIRDWVTNVETTHYILGSVAGPHPYPMIVRDFHAIIGKETRVQCQEKWGGLPDILLACVGGGSNAIGLFHEFIDEPSIRLIGVEAAGEGVDTDKHAATLTLGRVGVLHGAMSYLLQDEDGQVIEAHSISAGLDYPGVGPEHSYLKDIRRAEYYSVTDKQALDGFQQLSRLEGIIPALETSHAIAYLETLCPQLNGSPRIVINCSGRGDKDVQTVAKVLNY.

At Lys-104 the chain carries N6-(pyridoxal phosphate)lysine.

The protein belongs to the TrpB family. As to quaternary structure, tetramer of two alpha and two beta chains. Pyridoxal 5'-phosphate is required as a cofactor.

It carries out the reaction (1S,2R)-1-C-(indol-3-yl)glycerol 3-phosphate + L-serine = D-glyceraldehyde 3-phosphate + L-tryptophan + H2O. Its pathway is amino-acid biosynthesis; L-tryptophan biosynthesis; L-tryptophan from chorismate: step 5/5. In terms of biological role, the beta subunit is responsible for the synthesis of L-tryptophan from indole and L-serine. The protein is Tryptophan synthase beta chain 1 (trpB1) of Nostoc sp. (strain PCC 7120 / SAG 25.82 / UTEX 2576).